The primary structure comprises 110 residues: Large ribosomal subunit protein uL22 (110 aa).

It belongs to the universal ribosomal protein uL22 family. As to quaternary structure, part of the 50S ribosomal subunit.

Its function is as follows. This protein binds specifically to 23S rRNA; its binding is stimulated by other ribosomal proteins, e.g. L4, L17, and L20. It is important during the early stages of 50S assembly. It makes multiple contacts with different domains of the 23S rRNA in the assembled 50S subunit and ribosome. In terms of biological role, the globular domain of the protein is located near the polypeptide exit tunnel on the outside of the subunit, while an extended beta-hairpin is found that lines the wall of the exit tunnel in the center of the 70S ribosome. The protein is Large ribosomal subunit protein uL22 of Buchnera aphidicola subsp. Acyrthosiphon pisum (strain 5A).